Reading from the N-terminus, the 88-residue chain is UPF0250 protein Ssed_3490 (88 aa).

The protein belongs to the UPF0250 family.

This is UPF0250 protein Ssed_3490 from Shewanella sediminis (strain HAW-EB3).